The sequence spans 473 residues: Phosphoglucosamine mutase (473 aa).

Residue S102 is the Phosphoserine intermediate of the active site. The Mg(2+) site is built by S102, D248, D250, and D252. Residue S102 is modified to Phosphoserine.

Belongs to the phosphohexose mutase family. The cofactor is Mg(2+). Activated by phosphorylation.

It carries out the reaction alpha-D-glucosamine 1-phosphate = D-glucosamine 6-phosphate. Its function is as follows. Catalyzes the conversion of glucosamine-6-phosphate to glucosamine-1-phosphate. This Rhodospirillum centenum (strain ATCC 51521 / SW) protein is Phosphoglucosamine mutase.